Reading from the N-terminus, the 201-residue chain is Adenylyl-sulfate kinase (201 aa).

ATP is bound at residue 35-42 (GLSGSGKS). Ser109 functions as the Phosphoserine intermediate in the catalytic mechanism.

Belongs to the APS kinase family.

It catalyses the reaction adenosine 5'-phosphosulfate + ATP = 3'-phosphoadenylyl sulfate + ADP + H(+). It participates in sulfur metabolism; hydrogen sulfide biosynthesis; sulfite from sulfate: step 2/3. Its function is as follows. Catalyzes the synthesis of activated sulfate. The sequence is that of Adenylyl-sulfate kinase from Salmonella paratyphi A (strain AKU_12601).